Reading from the N-terminus, the 213-residue chain is MSETAPAAPAAAPPAEKAPVKKKAAKKAGGTPRKASGPPVSELITKAVAASKERSGVSLAALKKALAAAGYDVEKNNSRIKLGLKSLVSKGTLVQTKGTGASGSFKLNKKAASGEAKPKVKKAGGTKPKKPVGAAKKPKKAAGGATPKKSAKKTPKKAKKPAAATVTKKVAKSPKKAKVAKPKKAAKSAAKAVKPKAAKPKVVKPKKAAPKKK.

A compositionally biased stretch (low complexity) spans 1 to 17; that stretch reads MSETAPAAPAAAPPAEK. Positions 1–41 are disordered; the sequence is MSETAPAAPAAAPPAEKAPVKKKAAKKAGGTPRKASGPPVS. The residue at position 2 (serine 2) is an N-acetylserine; partial. Serine 2 is subject to Phosphoserine. Position 17 is an N6-acetyllysine (lysine 17). Residues lysine 23, lysine 26, and lysine 27 each carry the N6-(2-hydroxyisobutyryl)lysine modification. An N6-(beta-hydroxybutyryl)lysine; alternate modification is found at lysine 34. Lysine 34 is subject to N6-crotonyllysine; alternate. Lysine 34 is subject to N6-methyllysine; alternate. An H15 domain is found at 36–109; sequence SGPPVSELIT…GASGSFKLNK (74 aa). Position 46 is an N6-(2-hydroxyisobutyryl)lysine (lysine 46). The residue at position 52 (lysine 52) is an N6-(beta-hydroxybutyryl)lysine; alternate. Lysine 52 carries the post-translational modification N6-(2-hydroxyisobutyryl)lysine; alternate. Residue arginine 54 is modified to Citrulline. Lysine 63 bears the N6-(2-hydroxyisobutyryl)lysine mark. At lysine 64 the chain carries N6-(beta-hydroxybutyryl)lysine; alternate. Lysine 64 is subject to N6-crotonyllysine; alternate. Lysine 64 bears the N6-(2-hydroxyisobutyryl)lysine; alternate mark. Lysine 75 and lysine 81 each carry N6-(2-hydroxyisobutyryl)lysine. 2 positions are modified to N6-(beta-hydroxybutyryl)lysine; alternate: lysine 85 and lysine 90. Lysine 85, lysine 90, and lysine 97 each carry N6-crotonyllysine; alternate. N6-(2-hydroxyisobutyryl)lysine; alternate occurs at positions 85, 90, and 97. Residues 92-213 form a disordered region; sequence TLVQTKGTGA…KPKKAAPKKK (122 aa). N6-succinyllysine; alternate is present on lysine 97. Serine 104 carries the phosphoserine; by PKC modification. At lysine 106 the chain carries N6-(beta-hydroxybutyryl)lysine. N6-(2-hydroxyisobutyryl)lysine is present on residues lysine 110, lysine 117, lysine 121, lysine 129, and lysine 136. Positions 119–140 are enriched in basic residues; the sequence is KVKKAGGTKPKKPVGAAKKPKK. At threonine 146 the chain carries Phosphothreonine. Position 148 is an N6-(2-hydroxyisobutyryl)lysine (lysine 148). Basic residues predominate over residues 149-160; that stretch reads KSAKKTPKKAKK. 2 positions are modified to N6-crotonyllysine; alternate: lysine 159 and lysine 168. N6-(2-hydroxyisobutyryl)lysine; alternate occurs at positions 159 and 168. Positions 169-186 are enriched in basic residues; the sequence is KVAKSPKKAKVAKPKKAA. Position 187 is an N6-methyllysine; by EHMT1 and EHMT2 (lysine 187). Position 188 is an ADP-ribosylserine (serine 188). Residues 193-213 show a composition bias toward basic residues; the sequence is VKPKAAKPKVVKPKKAAPKKK. Position 213 is an N6-(2-hydroxyisobutyryl)lysine (lysine 213).

Belongs to the histone H1/H5 family. As to quaternary structure, interacts with TSC22D1 isoforms 2 and 5. H1 histones are progressively phosphorylated during the cell cycle, becoming maximally phosphorylated during late G2 phase and M phase, and being dephosphorylated sharply thereafter. In terms of processing, crotonylation (Kcr) is specifically present in male germ cells and marks testis-specific genes in post-meiotic cells, including X-linked genes that escape sex chromosome inactivation in haploid cells. Crotonylation marks active promoters and enhancers and confers resistance to transcriptional repressors. It is also associated with post-meiotically activated genes on autosomes. Post-translationally, citrullination at Arg-54 (H1R54ci) by PADI4 takes place within the DNA-binding site of H1 and results in its displacement from chromatin and global chromatin decondensation, thereby promoting pluripotency and stem cell maintenance. ADP-ribosylated on Ser-188 in response to DNA damage.

It is found in the nucleus. The protein localises to the chromosome. In terms of biological role, histone H1 protein binds to linker DNA between nucleosomes forming the macromolecular structure known as the chromatin fiber. Histones H1 are necessary for the condensation of nucleosome chains into higher-order structured fibers. Also acts as a regulator of individual gene transcription through chromatin remodeling, nucleosome spacing and DNA methylation. The protein is Histone H1.2 of Homo sapiens (Human).